The sequence spans 377 residues: Carbamoyl phosphate synthase small chain (377 aa).

Residues M1–E186 form a CPSase region. Residues S47, G238, and G240 each contribute to the L-glutamine site. A Glutamine amidotransferase type-1 domain is found at H190–A377. C266 acts as the Nucleophile in catalysis. The L-glutamine site is built by L267, Q270, N308, G310, and F311. Active-site residues include H350 and E352.

This sequence belongs to the CarA family. As to quaternary structure, composed of two chains; the small (or glutamine) chain promotes the hydrolysis of glutamine to ammonia, which is used by the large (or ammonia) chain to synthesize carbamoyl phosphate. Tetramer of heterodimers (alpha,beta)4.

It catalyses the reaction hydrogencarbonate + L-glutamine + 2 ATP + H2O = carbamoyl phosphate + L-glutamate + 2 ADP + phosphate + 2 H(+). It carries out the reaction L-glutamine + H2O = L-glutamate + NH4(+). It participates in amino-acid biosynthesis; L-arginine biosynthesis; carbamoyl phosphate from bicarbonate: step 1/1. Its pathway is pyrimidine metabolism; UMP biosynthesis via de novo pathway; (S)-dihydroorotate from bicarbonate: step 1/3. Its function is as follows. Small subunit of the glutamine-dependent carbamoyl phosphate synthetase (CPSase). CPSase catalyzes the formation of carbamoyl phosphate from the ammonia moiety of glutamine, carbonate, and phosphate donated by ATP, constituting the first step of 2 biosynthetic pathways, one leading to arginine and/or urea and the other to pyrimidine nucleotides. The small subunit (glutamine amidotransferase) binds and cleaves glutamine to supply the large subunit with the substrate ammonia. This is Carbamoyl phosphate synthase small chain from Neisseria meningitidis serogroup B (strain ATCC BAA-335 / MC58).